The primary structure comprises 699 residues: Elongation factor G (699 aa).

Residues 8–283 form the tr-type G domain; it reads EHIRNIGICA…AVVDFLPSPI (276 aa). GTP is bound by residues 17 to 24, 81 to 85, and 135 to 138; these read AHIDAGKT, DTPGH, and NKMD.

The protein belongs to the TRAFAC class translation factor GTPase superfamily. Classic translation factor GTPase family. EF-G/EF-2 subfamily.

The protein resides in the cytoplasm. In terms of biological role, catalyzes the GTP-dependent ribosomal translocation step during translation elongation. During this step, the ribosome changes from the pre-translocational (PRE) to the post-translocational (POST) state as the newly formed A-site-bound peptidyl-tRNA and P-site-bound deacylated tRNA move to the P and E sites, respectively. Catalyzes the coordinated movement of the two tRNA molecules, the mRNA and conformational changes in the ribosome. This Rickettsia peacockii (strain Rustic) protein is Elongation factor G.